The chain runs to 356 residues: Histidinol-phosphate aminotransferase (356 aa).

The residue at position 214 (Lys214) is an N6-(pyridoxal phosphate)lysine.

It belongs to the class-II pyridoxal-phosphate-dependent aminotransferase family. Histidinol-phosphate aminotransferase subfamily. In terms of assembly, homodimer. Requires pyridoxal 5'-phosphate as cofactor.

The catalysed reaction is L-histidinol phosphate + 2-oxoglutarate = 3-(imidazol-4-yl)-2-oxopropyl phosphate + L-glutamate. It participates in amino-acid biosynthesis; L-histidine biosynthesis; L-histidine from 5-phospho-alpha-D-ribose 1-diphosphate: step 7/9. In Aromatoleum aromaticum (strain DSM 19018 / LMG 30748 / EbN1) (Azoarcus sp. (strain EbN1)), this protein is Histidinol-phosphate aminotransferase.